Reading from the N-terminus, the 283-residue chain is tRNA-cytidine(32) 2-sulfurtransferase (283 aa).

Residues serine 37–serine 42 carry the PP-loop motif motif. Residues cysteine 112, cysteine 115, and cysteine 203 each coordinate [4Fe-4S] cluster.

It belongs to the TtcA family. Homodimer. It depends on Mg(2+) as a cofactor. [4Fe-4S] cluster is required as a cofactor.

The protein resides in the cytoplasm. The catalysed reaction is cytidine(32) in tRNA + S-sulfanyl-L-cysteinyl-[cysteine desulfurase] + AH2 + ATP = 2-thiocytidine(32) in tRNA + L-cysteinyl-[cysteine desulfurase] + A + AMP + diphosphate + H(+). Its pathway is tRNA modification. Its function is as follows. Catalyzes the ATP-dependent 2-thiolation of cytidine in position 32 of tRNA, to form 2-thiocytidine (s(2)C32). The sulfur atoms are provided by the cysteine/cysteine desulfurase (IscS) system. The chain is tRNA-cytidine(32) 2-sulfurtransferase from Legionella pneumophila (strain Paris).